A 277-amino-acid chain; its full sequence is 2,3,4,5-tetrahydropyridine-2,6-dicarboxylate N-succinyltransferase (277 aa).

Positions 106 and 143 each coordinate substrate.

Belongs to the transferase hexapeptide repeat family. In terms of assembly, homotrimer.

It is found in the cytoplasm. It carries out the reaction (S)-2,3,4,5-tetrahydrodipicolinate + succinyl-CoA + H2O = (S)-2-succinylamino-6-oxoheptanedioate + CoA. The protein operates within amino-acid biosynthesis; L-lysine biosynthesis via DAP pathway; LL-2,6-diaminopimelate from (S)-tetrahydrodipicolinate (succinylase route): step 1/3. The protein is 2,3,4,5-tetrahydropyridine-2,6-dicarboxylate N-succinyltransferase of Xylella fastidiosa (strain 9a5c).